The following is a 450-amino-acid chain: Phosphoglucosamine mutase (450 aa).

Catalysis depends on Ser101, which acts as the Phosphoserine intermediate. Mg(2+)-binding residues include Ser101, Asp241, Asp243, and Asp245. Position 101 is a phosphoserine (Ser101).

Belongs to the phosphohexose mutase family. The cofactor is Mg(2+). Post-translationally, activated by phosphorylation.

The catalysed reaction is alpha-D-glucosamine 1-phosphate = D-glucosamine 6-phosphate. Its function is as follows. Catalyzes the conversion of glucosamine-6-phosphate to glucosamine-1-phosphate. In Listeria monocytogenes serovar 1/2a (strain ATCC BAA-679 / EGD-e), this protein is Phosphoglucosamine mutase.